The chain runs to 316 residues: Apolipoprotein E (316 aa).

The N-terminal stretch at 1-18 (MKALWAVLVVTLLAGCLA) is a signal peptide. 8 tandem repeats follow at residues 76–97 (VLME…EQLG), 98–119 (PMAE…SRLG), 120–141 (ADME…TMLG), 142–163 (QSTE…KRLM), 164–185 (RDAE…EGAE), 186–207 (RGVG…QRTA), 208–229 (NLGA…ARIR), and 230–251 (GRLE…EQME). The interval 76–251 (VLMEDTMTEL…RLEEMREQME (176 aa)) is 8 X 22 AA approximate tandem repeats. Residue methionine 139 is modified to Methionine sulfoxide. Serine 143 carries the phosphoserine modification. The tract at residues 154-164 (HLRKLRKRLMR) is LDL and other lipoprotein receptors binding. Residue 158–161 (LRKR) coordinates heparin. A lipid-binding and lipoprotein association region spans residues 206-286 (TANLGAGAGK…GWFEPLVEDM (81 aa)). Position 225–232 (225–232 (GARIRGRL)) interacts with heparin. The tract at residues 262–316 (QQMRLQAEIFQARLKGWFEPLVEDMQRQWANLVEKIQASVAANPIPPSSVPQESP) is homooligomerization. The specificity for association with VLDL stretch occupies residues 274 to 286 (RLKGWFEPLVEDM).

It belongs to the apolipoprotein A1/A4/E family. In terms of assembly, homotetramer. May interact with ABCA1; functionally associated with ABCA1 in the biogenesis of HDLs. May interact with APP/A4 amyloid-beta peptide; the interaction is extremely stable in vitro but its physiological significance is unclear. May interact with MAPT. May interact with MAP2. In the cerebrospinal fluid, interacts with secreted SORL1. Interacts with PMEL; this allows the loading of PMEL luminal fragment on ILVs to induce fibril nucleation. APOE exists as multiple glycosylated and sialylated glycoforms within cells and in plasma. The extent of glycosylation and sialylation are tissue and context specific. Post-translationally, glycated in plasma VLDL. In terms of processing, phosphorylated by FAM20C in the extracellular medium.

The protein localises to the secreted. It is found in the extracellular space. Its subcellular location is the extracellular matrix. It localises to the extracellular vesicle. The protein resides in the endosome. The protein localises to the multivesicular body. Functionally, APOE is an apolipoprotein, a protein associating with lipid particles, that mainly functions in lipoprotein-mediated lipid transport between organs via the plasma and interstitial fluids. APOE is a core component of plasma lipoproteins and is involved in their production, conversion and clearance. Apolipoproteins are amphipathic molecules that interact both with lipids of the lipoprotein particle core and the aqueous environment of the plasma. As such, APOE associates with chylomicrons, chylomicron remnants, very low density lipoproteins (VLDL) and intermediate density lipoproteins (IDL) but shows a preferential binding to high-density lipoproteins (HDL). It also binds a wide range of cellular receptors including the LDL receptor/LDLR, the LDL receptor-related proteins LRP1, LRP2 and LRP8 and the very low-density lipoprotein receptor/VLDLR that mediate the cellular uptake of the APOE-containing lipoprotein particles. Finally, APOE also has a heparin-binding activity and binds heparan-sulfate proteoglycans on the surface of cells, a property that supports the capture and the receptor-mediated uptake of APOE-containing lipoproteins by cells. A main function of APOE is to mediate lipoprotein clearance through the uptake of chylomicrons, VLDLs, and HDLs by hepatocytes. APOE is also involved in the biosynthesis by the liver of VLDLs as well as their uptake by peripheral tissues ensuring the delivery of triglycerides and energy storage in muscle, heart and adipose tissues. By participating in the lipoprotein-mediated distribution of lipids among tissues, APOE plays a critical role in plasma and tissues lipid homeostasis. APOE is also involved in two steps of reverse cholesterol transport, the HDLs-mediated transport of cholesterol from peripheral tissues to the liver, and thereby plays an important role in cholesterol homeostasis. First, it is functionally associated with ABCA1 in the biogenesis of HDLs in tissues. Second, it is enriched in circulating HDLs and mediates their uptake by hepatocytes. APOE also plays an important role in lipid transport in the central nervous system, regulating neuron survival and sprouting. The chain is Apolipoprotein E (Apoe) from Peromyscus leucopus (White-footed mouse).